The sequence spans 891 residues: Dynein axonemal intermediate chain 3 (891 aa).

Residues 1–17 (MAPKQKKKTSRGKKRLK) show a composition bias toward basic residues. A disordered region spans residues 1 to 22 (MAPKQKKKTSRGKKRLKPVLAA). 4 WD repeats span residues 395–435 (ESPD…DRIE), 477–533 (GHKK…PLTP), 670–709 (IHDGTVHTIQRSPFYNDIILTVGGWNVAIWKEGVMTGPLL), and 713–753 (CAPK…HEPA). The stretch at 818–861 (LEYVEQRKKIREQEKKEMELEMAKKKVKTYQKSKEQMQAELKMD) forms a coiled coil.

As to quaternary structure, interacts with ACTR2; this interaction reduces binding of the Arp2/3 complex to the VCA domain of nucleation promoting factors. Part of the multisubunit axonemal dynein complex formed at least of two heavy chains and a number of intermediate and light chains. Found in a associated with the catalytic heavy chain DNAH2, the intermediate chain DNAI4, and the light chain DYNLT1.

The protein localises to the cytoplasm. Its function is as follows. Acts as a negative regulator of cell migration, invasion, and metastasis downstream of p53/TP53, through inhibition of Arp2/3 complex-mediated actin polymerization. Via its association with the multisubunit axonemal dynein complex, is potentially involved in the regulation of cilia function. May play a role in osteogenesis of dental tissue-derived mesenchymal stem cells. The sequence is that of Dynein axonemal intermediate chain 3 from Homo sapiens (Human).